The following is a 305-amino-acid chain: E3 ubiquitin-protein ligase RNF115 (305 aa).

At A2 the chain carries N-acetylalanine. Basic and acidic residues predominate over residues 100 to 110; sequence NRANERGHQTH. The disordered stretch occupies residues 100-139; that stretch reads NRANERGHQTHTDFWGPSRPPRLPMTRRYRSRGSTRPDRS. Residue S133 is modified to Phosphoserine. An RING-type zinc finger spans residues 229–270; that stretch reads CPVCKEDYTVEEKVRQLPCNHFFHSSCIVPWLELHDTCPVCR. The tract at residues 274-305 is disordered; that stretch reads NGEDSTRQTQSSEASASNRFSNDSQLHDRWTF. A compositionally biased stretch (polar residues) spans 280-297; the sequence is RQTQSSEASASNRFSNDS.

In terms of assembly, interacts with RAB7A. Interacts with EGFR and FLT3. Interacts with BST2. Interacts with STX17. Interacts with YWHAE. In terms of processing, phosphorylated by AKT1, allowing association with the 14-3-3 chaperones that facilitates associating with TLRs. Post-translationally, deubiquitinated by USP9X; antogonizing its autoubiquitination and subsequent proteasomal degradation. RING-type zinc finger-dependent and E2-dependent autoubiquitination.

It is found in the cytoplasm. The protein localises to the cytoplasmic vesicle. Its subcellular location is the phagosome. The protein resides in the nucleus. It localises to the endoplasmic reticulum. It is found in the golgi apparatus. The catalysed reaction is S-ubiquitinyl-[E2 ubiquitin-conjugating enzyme]-L-cysteine + [acceptor protein]-L-lysine = [E2 ubiquitin-conjugating enzyme]-L-cysteine + N(6)-ubiquitinyl-[acceptor protein]-L-lysine.. Its pathway is protein modification; protein ubiquitination. E3 ubiquitin-protein ligase that catalyzes the 'Lys-48'- and/or 'Lys-63'-linked polyubiquitination of various substrates and thereby plays a role in a number of signaling pathways including autophagy, innate immunity, cell proliferation and cell death. Plays a role in the endosomal trafficking and degradation of membrane receptors including EGFR, FLT3, MET and CXCR4 through their polyubiquitination. Participates together with BST2 in antiviral immunity by facilitating the internalization of HIV-1 virions into intracellular vesicles leading to their lysosomal degradation. Also possesses an antiviral activity independently of BST2 by promoting retroviral GAG proteins ubiquitination, redistribution to endo-lysosomal compartments and, ultimately, lysosomal degradation. Catalyzes distinct types of ubiquitination on MAVS and STING1 at different phases of viral infection to promote innate antiviral response. Mediates the 'Lys-48'-linked ubiquitination of MAVS leading to its proteasomal degradation and ubiquitinates STING1 via 'Lys-63'-linked polyubiquitination, critical for its oligomerization and the subsequent recruitment of TBK1. Plays a positive role in the autophagosome-lysosome fusion by interacting with STX17 and enhancing its stability without affecting 'Lys-48'- or 'Lys-63'-linked polyubiquitination levels, which in turn promotes autophagosome maturation. Negatively regulates TLR-induced expression of proinflammatory cytokines by catalyzing 'Lys-11'-linked ubiquitination of RAB1A and RAB13 to inhibit post-ER trafficking of TLRs to the Golgi by RAB1A and subsequently from the Golgi apparatus to the cell surface by RAB13. The chain is E3 ubiquitin-protein ligase RNF115 from Mus musculus (Mouse).